The following is a 286-amino-acid chain: Release factor glutamine methyltransferase (286 aa).

S-adenosyl-L-methionine-binding positions include 122 to 126 (GTGTG), Asp145, Trp173, and Asn188. Position 188 to 191 (188 to 191 (NPPY)) interacts with substrate.

This sequence belongs to the protein N5-glutamine methyltransferase family. PrmC subfamily.

It carries out the reaction L-glutaminyl-[peptide chain release factor] + S-adenosyl-L-methionine = N(5)-methyl-L-glutaminyl-[peptide chain release factor] + S-adenosyl-L-homocysteine + H(+). Methylates the class 1 translation termination release factors RF1/PrfA and RF2/PrfB on the glutamine residue of the universally conserved GGQ motif. The polypeptide is Release factor glutamine methyltransferase (Shewanella oneidensis (strain ATCC 700550 / JCM 31522 / CIP 106686 / LMG 19005 / NCIMB 14063 / MR-1)).